A 734-amino-acid polypeptide reads, in one-letter code: Polyphosphate kinase (734 aa).

Asparagine 67 contacts ATP. Residues arginine 392 and arginine 422 each contribute to the Mg(2+) site. Positions threonine 447–threonine 481 constitute a PLD phosphodiesterase domain. The active-site Phosphohistidine intermediate is histidine 452. ATP is bound by residues tyrosine 485, arginine 581, and histidine 609. A disordered region spans residues lysine 705–arginine 734.

It belongs to the polyphosphate kinase 1 (PPK1) family. The cofactor is Mg(2+). Post-translationally, an intermediate of this reaction is the autophosphorylated ppk in which a phosphate is covalently linked to a histidine residue through a N-P bond.

It carries out the reaction [phosphate](n) + ATP = [phosphate](n+1) + ADP. Functionally, catalyzes the reversible transfer of the terminal phosphate of ATP to form a long-chain polyphosphate (polyP). The protein is Polyphosphate kinase of Staphylococcus epidermidis (strain ATCC 12228 / FDA PCI 1200).